The following is a 392-amino-acid chain: Aminomethyltransferase, mitochondrial (392 aa).

Residues 1–16 (MLRAGCRAALARRHLS) constitute a mitochondrion transit peptide. Residues glutamate 221, arginine 250, and tyrosine 388 each coordinate substrate.

Belongs to the GcvT family. In terms of assembly, the glycine cleavage system is composed of four proteins: P, T, L and H.

It is found in the mitochondrion. The enzyme catalyses N(6)-[(R)-S(8)-aminomethyldihydrolipoyl]-L-lysyl-[protein] + (6S)-5,6,7,8-tetrahydrofolate = N(6)-[(R)-dihydrolipoyl]-L-lysyl-[protein] + (6R)-5,10-methylene-5,6,7,8-tetrahydrofolate + NH4(+). Functionally, the glycine cleavage system catalyzes the degradation of glycine. The protein is Aminomethyltransferase, mitochondrial of Gallus gallus (Chicken).